A 209-amino-acid polypeptide reads, in one-letter code: Probable GTP-binding protein EngB (209 aa).

In terms of domain architecture, EngB-type G spans 24–198; that stretch reads EGMEVAFAGR…HGILDQWLGL (175 aa). GTP-binding positions include 32-39, 59-63, 77-80, 144-147, and 177-179; these read GRSNAGKS, GRTQL, DLPG, TKAD, and FSA. The Mg(2+) site is built by Ser39 and Thr61.

The protein belongs to the TRAFAC class TrmE-Era-EngA-EngB-Septin-like GTPase superfamily. EngB GTPase family. Requires Mg(2+) as cofactor.

Functionally, necessary for normal cell division and for the maintenance of normal septation. This Thioalkalivibrio sulfidiphilus (strain HL-EbGR7) protein is Probable GTP-binding protein EngB.